A 203-amino-acid polypeptide reads, in one-letter code: Holliday junction branch migration complex subunit RuvA (203 aa).

A domain I region spans residues 1–64 (MIGRLRGIII…EDAQLLYGFN (64 aa)). The domain II stretch occupies residues 65 to 142 (NKQERTLFKE…KGLHGDLFTP (78 aa)). The flexible linker stretch occupies residues 143-154 (AADLVLTSPASP). Positions 155–203 (ATDDAEQEAVAALVALGYKPQEASRMVSKIARPDASSETLIREALHAAL) are domain III.

It belongs to the RuvA family. Homotetramer. Forms an RuvA(8)-RuvB(12)-Holliday junction (HJ) complex. HJ DNA is sandwiched between 2 RuvA tetramers; dsDNA enters through RuvA and exits via RuvB. An RuvB hexamer assembles on each DNA strand where it exits the tetramer. Each RuvB hexamer is contacted by two RuvA subunits (via domain III) on 2 adjacent RuvB subunits; this complex drives branch migration. In the full resolvosome a probable DNA-RuvA(4)-RuvB(12)-RuvC(2) complex forms which resolves the HJ.

It localises to the cytoplasm. Its function is as follows. The RuvA-RuvB-RuvC complex processes Holliday junction (HJ) DNA during genetic recombination and DNA repair, while the RuvA-RuvB complex plays an important role in the rescue of blocked DNA replication forks via replication fork reversal (RFR). RuvA specifically binds to HJ cruciform DNA, conferring on it an open structure. The RuvB hexamer acts as an ATP-dependent pump, pulling dsDNA into and through the RuvAB complex. HJ branch migration allows RuvC to scan DNA until it finds its consensus sequence, where it cleaves and resolves the cruciform DNA. This chain is Holliday junction branch migration complex subunit RuvA, found in Escherichia fergusonii (strain ATCC 35469 / DSM 13698 / CCUG 18766 / IAM 14443 / JCM 21226 / LMG 7866 / NBRC 102419 / NCTC 12128 / CDC 0568-73).